A 334-amino-acid chain; its full sequence is Holliday junction branch migration complex subunit RuvB (334 aa).

Residues Ala4–Tyr184 form a large ATPase domain (RuvB-L) region. ATP is bound by residues Arg24, Gly65, Lys68, Thr69, Thr70, Glu131 to Tyr133, Arg174, Tyr184, and Arg221. Position 69 (Thr69) interacts with Mg(2+). Residues Asn185–Asp255 form a small ATPAse domain (RuvB-S) region. A head domain (RuvB-H) region spans residues Ser258 to Glu334. DNA is bound by residues Arg294, Arg313, and Arg318.

Belongs to the RuvB family. In terms of assembly, homohexamer. Forms an RuvA(8)-RuvB(12)-Holliday junction (HJ) complex. HJ DNA is sandwiched between 2 RuvA tetramers; dsDNA enters through RuvA and exits via RuvB. An RuvB hexamer assembles on each DNA strand where it exits the tetramer. Each RuvB hexamer is contacted by two RuvA subunits (via domain III) on 2 adjacent RuvB subunits; this complex drives branch migration. In the full resolvosome a probable DNA-RuvA(4)-RuvB(12)-RuvC(2) complex forms which resolves the HJ.

It localises to the cytoplasm. The catalysed reaction is ATP + H2O = ADP + phosphate + H(+). Its function is as follows. The RuvA-RuvB-RuvC complex processes Holliday junction (HJ) DNA during genetic recombination and DNA repair, while the RuvA-RuvB complex plays an important role in the rescue of blocked DNA replication forks via replication fork reversal (RFR). RuvA specifically binds to HJ cruciform DNA, conferring on it an open structure. The RuvB hexamer acts as an ATP-dependent pump, pulling dsDNA into and through the RuvAB complex. RuvB forms 2 homohexamers on either side of HJ DNA bound by 1 or 2 RuvA tetramers; 4 subunits per hexamer contact DNA at a time. Coordinated motions by a converter formed by DNA-disengaged RuvB subunits stimulates ATP hydrolysis and nucleotide exchange. Immobilization of the converter enables RuvB to convert the ATP-contained energy into a lever motion, pulling 2 nucleotides of DNA out of the RuvA tetramer per ATP hydrolyzed, thus driving DNA branch migration. The RuvB motors rotate together with the DNA substrate, which together with the progressing nucleotide cycle form the mechanistic basis for DNA recombination by continuous HJ branch migration. Branch migration allows RuvC to scan DNA until it finds its consensus sequence, where it cleaves and resolves cruciform DNA. This chain is Holliday junction branch migration complex subunit RuvB, found in Shewanella baltica (strain OS195).